The chain runs to 329 residues: G-protein coupled bile acid receptor 1 (329 aa).

Over 1–19 (MTSNSTREVPSPVPAGALG) the chain is Extracellular. N-linked (GlcNAc...) asparagine glycosylation is present at Asn4. The helical transmembrane segment at 20–40 (LSLALASLIVAANLLLAVGIA) threads the bilayer. Topologically, residues 41-52 (GDRRLRSPPAGC) are cytoplasmic. A helical membrane pass occupies residues 53–73 (FFLSLLLAGLLTGLALPALPV). The Extracellular segment spans residues 74 to 85 (LWSQSRRGYWSC). Cys85 and Cys155 are oxidised to a cystine. Residues 86 to 106 (LFLYLAPNFCFLSLLANLLLV) form a helical membrane-spanning segment. The Cytoplasmic segment spans residues 107-125 (HGERYMAVLRPLRPRGSMR). Residues 126 to 146 (LALLLTWAAPLLFASLPALGW) form a helical membrane-spanning segment. The Extracellular segment spans residues 147-165 (NHWAPGGNCSSQAVFPAPY). A glycan (N-linked (GlcNAc...) asparagine) is linked at Asn154. The helical transmembrane segment at 166 to 186 (LYLEIYGLLLPAVGAAALLSV) threads the bilayer. The Cytoplasmic segment spans residues 187–230 (RVLVTAHRQLQDIRRLERAVCRGAPSALARALTWRQARAQAGAT). The helical transmembrane segment at 231–251 (LLFGLCWGPYVATLLLSVLAF) threads the bilayer. Residues 252–261 (EQRPPLGPGT) are Extracellular-facing. Residues 262–282 (LLSLISLGSASAAAVPVAMGL) form a helical membrane-spanning segment. Topologically, residues 283 to 329 (GDQRYTGPWRVAAQKWLRMLRGRPQSSPGPSTAYHTSSQSSVDLDLN) are cytoplasmic. The tract at residues 304 to 329 (GRPQSSPGPSTAYHTSSQSSVDLDLN) is disordered. Positions 306 to 329 (PQSSPGPSTAYHTSSQSSVDLDLN) are enriched in polar residues.

The protein belongs to the G-protein coupled receptor 1 family.

The protein resides in the cell membrane. Its function is as follows. Receptor for bile acid. Bile acid-binding induces its internalization, activation of extracellular signal-regulated kinase and intracellular cAMP production. May be involved in the suppression of macrophage functions by bile acids. Involved in bile acid promoted GLP1R secretion. This chain is G-protein coupled bile acid receptor 1 (GPBAR1), found in Bos taurus (Bovine).